The sequence spans 227 residues: Cytochrome c oxidase subunit 2 (227 aa).

Topologically, residues 1–14 are mitochondrial intermembrane; sequence MAYPFQLGLQDATS. Residues 15–45 form a helical membrane-spanning segment; it reads PIMEELTNFHDHTLMIVFLISSLVLYIISLM. The Mitochondrial matrix segment spans residues 46-59; it reads LTTKLTHTSTMDAQ. Residues 60 to 87 traverse the membrane as a helical segment; it reads EVETIWTILPAAILVLIALPSLRILYMM. Residues 88 to 227 lie on the Mitochondrial intermembrane side of the membrane; that stretch reads DEINNPVLTV…YFESWSASMI (140 aa). Cu cation contacts are provided by H161, C196, E198, C200, H204, and M207. Mg(2+) is bound at residue E198. At Y218 the chain carries Phosphotyrosine.

This sequence belongs to the cytochrome c oxidase subunit 2 family. Component of the cytochrome c oxidase (complex IV, CIV), a multisubunit enzyme composed of 14 subunits. The complex is composed of a catalytic core of 3 subunits MT-CO1, MT-CO2 and MT-CO3, encoded in the mitochondrial DNA, and 11 supernumerary subunits COX4I, COX5A, COX5B, COX6A, COX6B, COX6C, COX7A, COX7B, COX7C, COX8 and NDUFA4, which are encoded in the nuclear genome. The complex exists as a monomer or a dimer and forms supercomplexes (SCs) in the inner mitochondrial membrane with NADH-ubiquinone oxidoreductase (complex I, CI) and ubiquinol-cytochrome c oxidoreductase (cytochrome b-c1 complex, complex III, CIII), resulting in different assemblies (supercomplex SCI(1)III(2)IV(1) and megacomplex MCI(2)III(2)IV(2)). Found in a complex with TMEM177, COA6, COX18, COX20, SCO1 and SCO2. Interacts with TMEM177 in a COX20-dependent manner. Interacts with COX20. Interacts with COX16. Cu cation serves as cofactor.

It is found in the mitochondrion inner membrane. The catalysed reaction is 4 Fe(II)-[cytochrome c] + O2 + 8 H(+)(in) = 4 Fe(III)-[cytochrome c] + 2 H2O + 4 H(+)(out). Component of the cytochrome c oxidase, the last enzyme in the mitochondrial electron transport chain which drives oxidative phosphorylation. The respiratory chain contains 3 multisubunit complexes succinate dehydrogenase (complex II, CII), ubiquinol-cytochrome c oxidoreductase (cytochrome b-c1 complex, complex III, CIII) and cytochrome c oxidase (complex IV, CIV), that cooperate to transfer electrons derived from NADH and succinate to molecular oxygen, creating an electrochemical gradient over the inner membrane that drives transmembrane transport and the ATP synthase. Cytochrome c oxidase is the component of the respiratory chain that catalyzes the reduction of oxygen to water. Electrons originating from reduced cytochrome c in the intermembrane space (IMS) are transferred via the dinuclear copper A center (CU(A)) of subunit 2 and heme A of subunit 1 to the active site in subunit 1, a binuclear center (BNC) formed by heme A3 and copper B (CU(B)). The BNC reduces molecular oxygen to 2 water molecules using 4 electrons from cytochrome c in the IMS and 4 protons from the mitochondrial matrix. The polypeptide is Cytochrome c oxidase subunit 2 (MT-CO2) (Conilurus penicillatus (Brush-tailed rabbit-rat)).